The chain runs to 361 residues: Peptide chain release factor 1 (361 aa).

An N5-methylglutamine modification is found at Gln237. A disordered region spans residues 286–306 (AKQDQEQAAKRKSLVGSGDRS).

Belongs to the prokaryotic/mitochondrial release factor family. In terms of processing, methylated by PrmC. Methylation increases the termination efficiency of RF1.

It localises to the cytoplasm. Peptide chain release factor 1 directs the termination of translation in response to the peptide chain termination codons UAG and UAA. The protein is Peptide chain release factor 1 of Coxiella burnetii (strain CbuG_Q212) (Coxiella burnetii (strain Q212)).